Here is a 554-residue protein sequence, read N- to C-terminus: MKSTSKLQEMKLKNITEIAESVGLSEDDIELYGKYKAKISLDVLKQKPRQREGKVILVTSINPTPYGEGKTTTAIGLSMAINRLGFKSIVTLREPSLGPYLGIKGGATGGGVAQVLPSTDINLHFTGDIHAVTSANNLLCAAIDNHIYHGNELNINPKAVMVKRAMDMNDRALRNIVIGLGDGQRGAVREDGFIISVASEVMAILCLSNDLEDLKERLGNILVGFSYDKKPIYAKDLKVHGAMALLLKDAIKPNLVQTSEATAAIIHGGPFANIAHGTNSIIAIKIAQKLSDYVVVEAGFGADLGAEKFVNIVSRKSGIYPSAAVMVVTTKALKYHGSMGAKENLTSENIDTLKKGFKNLEKHIENLKLLGLEAIVTLNRFPHDTPAEISEIESFCKERGVEFAVSEAYELGSEGALDLAQKVIEVASRKRKINFVYEDSDPVEEKIRKVAKTIYGAADVQFSKSALLGLELIKKLNIDHFPICMAKTQYSLSDDPKLLGRPKDFVLNVNEIRINNGAQFIVVICGDIMTMPGLSKDYAALHLDIDEDGNVVWV.

64–71 (TPYGEGKT) lines the ATP pocket.

Belongs to the formate--tetrahydrofolate ligase family.

The enzyme catalyses (6S)-5,6,7,8-tetrahydrofolate + formate + ATP = (6R)-10-formyltetrahydrofolate + ADP + phosphate. It participates in one-carbon metabolism; tetrahydrofolate interconversion. The protein is Formate--tetrahydrofolate ligase of Caldicellulosiruptor saccharolyticus (strain ATCC 43494 / DSM 8903 / Tp8T 6331).